A 102-amino-acid chain; its full sequence is Urease subunit beta (102 aa).

The protein belongs to the urease beta subunit family. In terms of assembly, heterotrimer of UreA (gamma), UreB (beta) and UreC (alpha) subunits. Three heterotrimers associate to form the active enzyme.

It is found in the cytoplasm. The catalysed reaction is urea + 2 H2O + H(+) = hydrogencarbonate + 2 NH4(+). It functions in the pathway nitrogen metabolism; urea degradation; CO(2) and NH(3) from urea (urease route): step 1/1. The protein is Urease subunit beta of Alteromonas mediterranea (strain DSM 17117 / CIP 110805 / LMG 28347 / Deep ecotype).